Here is a 102-residue protein sequence, read N- to C-terminus: Acid shock protein (102 aa).

An N-terminal signal peptide occupies residues 1 to 21 (MKKVLALVVAAAMGLSSAAFA). Over residues 22–41 (AETATTPAPTATTTKAAPAK) the composition is skewed to low complexity. Residues 22-58 (AETATTPAPTATTTKAAPAKTTHHKKQHKAAPAQKAQ) constitute a propeptide that is removed on maturation. A disordered region spans residues 22–102 (AETATTPAPT…PAKPAAQPAA (81 aa)). Positions 80–90 (AAKKHARKHSH) are enriched in basic residues. Positions 91–102 (QQPAKPAAQPAA) are enriched in low complexity.

Belongs to the Asr family. In terms of processing, proteolytic processing gives rise to the active protein.

It localises to the periplasm. Its function is as follows. Required for growth and/or survival at acidic conditions. This chain is Acid shock protein, found in Escherichia coli O127:H6 (strain E2348/69 / EPEC).